The following is a 425-amino-acid chain: 5-hydroxytryptamine receptor 7 (425 aa).

Topologically, residues 1-72 (MLIQVQPSHL…LLYGDTEKIV (72 aa)) are extracellular. N-linked (GlcNAc...) asparagine glycosylation is found at Asn-14, Asn-41, and Asn-51. A helical membrane pass occupies residues 73–97 (IGVVLSIITLFTIAGNALVIISVCI). The Cytoplasmic portion of the chain corresponds to 98-107 (VKKLRQPSNY). Residues 108-129 (LVVSLAAADLSVAVAVMPFVII) form a helical membrane-spanning segment. Over 130-141 (TDLVGGEWLFGK) the chain is Extracellular. Residues 142-167 (VFCNVFIAMDVMCCTASIMTLCVISV) form a helical membrane-spanning segment. Cysteines 144 and 220 form a disulfide. Asp-151 contacts serotonin. Over 168 to 187 (DRYLGITRPLTYPARQNGKL) the chain is Cytoplasmic. Residues 188-208 (MAKMVFIVWLLSASITLPPLF) traverse the membrane as a helical segment. At 209–226 (GWAKNVNVERVCLISQDF) the chain is on the extracellular side. The chain crosses the membrane as a helical span at residues 227–249 (GYTVYSTAVAFYIPMTVMLVMYQ). The Cytoplasmic segment spans residues 250-322 (RIFVAAKISA…SIFKREQKAA (73 aa)). Residues 323-348 (RTLGIIVGAFTFCWLPFFLLSTARPF) form a helical membrane-spanning segment. The Extracellular segment spans residues 349–359 (ICGIMCSCMPL). Residues 360 to 383 (RLERTLLWLGYTNSLINPLIYAFF) form a helical membrane-spanning segment. Residues 384–425 (NRDLRTTFWNLLRCKYTNINRRLSAASMHEALKVTERHEGIL) are Cytoplasmic-facing. Cys-397 carries the S-palmitoyl cysteine lipid modification.

Belongs to the G-protein coupled receptor 1 family.

The protein localises to the cell membrane. In terms of biological role, G-protein coupled receptor for 5-hydroxytryptamine (serotonin), a biogenic hormone that functions as a neurotransmitter, a hormone and a mitogen. Ligand binding causes a conformation change that triggers signaling via guanine nucleotide-binding proteins (G proteins) and modulates the activity of downstream effectors. HTR7 is coupled to G(s) G alpha proteins and mediates activation of adenylate cyclase activity. In Xenopus laevis (African clawed frog), this protein is 5-hydroxytryptamine receptor 7 (htr7).